Consider the following 180-residue polypeptide: NAD(P)H-quinone oxidoreductase subunit I, chloroplastic (180 aa).

4Fe-4S ferredoxin-type domains lie at 55–84 and 95–124; these read GRIH…VDWR and LNYS…MTEE. The [4Fe-4S] cluster site is built by Cys64, Cys67, Cys70, Cys74, Cys104, Cys107, Cys110, and Cys114.

The protein belongs to the complex I 23 kDa subunit family. As to quaternary structure, NDH is composed of at least 16 different subunits, 5 of which are encoded in the nucleus. Requires [4Fe-4S] cluster as cofactor.

It is found in the plastid. Its subcellular location is the chloroplast thylakoid membrane. It catalyses the reaction a plastoquinone + NADH + (n+1) H(+)(in) = a plastoquinol + NAD(+) + n H(+)(out). The enzyme catalyses a plastoquinone + NADPH + (n+1) H(+)(in) = a plastoquinol + NADP(+) + n H(+)(out). NDH shuttles electrons from NAD(P)H:plastoquinone, via FMN and iron-sulfur (Fe-S) centers, to quinones in the photosynthetic chain and possibly in a chloroplast respiratory chain. The immediate electron acceptor for the enzyme in this species is believed to be plastoquinone. Couples the redox reaction to proton translocation, and thus conserves the redox energy in a proton gradient. In Chloranthus spicatus (Chulantree), this protein is NAD(P)H-quinone oxidoreductase subunit I, chloroplastic.